The primary structure comprises 403 residues: MQRAVSVVARLGFRLQAFPPALCRPLSCAQEVLRRTPLYDFHLAHGGKMVAFAGWSLPVQYRDSHTDSHLHTRQHCSLFDVSHMLQTKILGSDRVKLMESLVVGDIAELRPNQGTLSLFTNEAGGILDDLIVTNTSEGHLYVVSNAGCWEKDLALMQDKVRELQNQGRDVGLEVLDNALLALQGPTAAQVLQAGVADDLRKLPFMTSAVMEVFGVSGCRVTRCGYTGEDGVEISVPVAGAVHLATAILKNPEVKLAGLAARDSLRLEAGLCLYGNDIDEHTTPVEGSLSWTLGKRRRAAMDFPGAKVIVPQLKGRVQRRRVGLMCEGAPMRAHSPILNMEGTKIGTVTSGCPSPSLKKNVAMGYVPCEYSRPGTMLLVEVRRKQQMAVVSKMPFVPTNYYTLK.

A mitochondrion-targeting transit peptide spans 1–28; that stretch reads MQRAVSVVARLGFRLQAFPPALCRPLSC. Residues glutamate 232, arginine 261, and tyrosine 399 each coordinate substrate.

This sequence belongs to the GcvT family. In terms of assembly, the glycine cleavage system is composed of four proteins: P, T, L and H.

The protein localises to the mitochondrion. It catalyses the reaction N(6)-[(R)-S(8)-aminomethyldihydrolipoyl]-L-lysyl-[protein] + (6S)-5,6,7,8-tetrahydrofolate = N(6)-[(R)-dihydrolipoyl]-L-lysyl-[protein] + (6R)-5,10-methylene-5,6,7,8-tetrahydrofolate + NH4(+). Functionally, the glycine cleavage system catalyzes the degradation of glycine. The protein is Aminomethyltransferase, mitochondrial of Homo sapiens (Human).